Reading from the N-terminus, the 359-residue chain is Protein mab-21-like 2 (359 aa).

It belongs to the mab-21 family. As to expression, expressed in the adult cerebellum and eye, with lower levels in the adult forebrain. In embryos at 10.5 days post-coitum strongly expressed in the rostral and distal regions of the developing neural retina, with no expression immediately adjacent to the closing optic fissure. Expression is also observed in the dorsal and ventral aspects of the developing forelimb bud and in the developing pharyngeal arches, as well as in the midbrain.

It localises to the nucleus. The protein resides in the cytoplasm. Functionally, required for several aspects of embryonic development including normal development of the eye, notochord, neural tube and other organ tissues, and for embryonic turning. This is Protein mab-21-like 2 (Mab21l2) from Mus musculus (Mouse).